The chain runs to 445 residues: Putative U-box domain-containing protein 47 (445 aa).

The U-box domain occupies glutamate 64–aspartate 137.

It carries out the reaction S-ubiquitinyl-[E2 ubiquitin-conjugating enzyme]-L-cysteine + [acceptor protein]-L-lysine = [E2 ubiquitin-conjugating enzyme]-L-cysteine + N(6)-ubiquitinyl-[acceptor protein]-L-lysine.. The protein operates within protein modification; protein ubiquitination. Functions as an E3 ubiquitin ligase. The sequence is that of Putative U-box domain-containing protein 47 (PUB47) from Arabidopsis thaliana (Mouse-ear cress).